The sequence spans 299 residues: ATP synthase gamma chain (299 aa).

This sequence belongs to the ATPase gamma chain family. F-type ATPases have 2 components, CF(1) - the catalytic core - and CF(0) - the membrane proton channel. CF(1) has five subunits: alpha(3), beta(3), gamma(1), delta(1), epsilon(1). CF(0) has three main subunits: a, b and c.

It is found in the cell membrane. Produces ATP from ADP in the presence of a proton gradient across the membrane. The gamma chain is believed to be important in regulating ATPase activity and the flow of protons through the CF(0) complex. This Leifsonia xyli subsp. xyli (strain CTCB07) protein is ATP synthase gamma chain.